The chain runs to 957 residues: Glycine dehydrogenase (decarboxylating) (957 aa).

Lysine 708 carries the N6-(pyridoxal phosphate)lysine modification.

It belongs to the GcvP family. In terms of assembly, the glycine cleavage system is composed of four proteins: P, T, L and H. The cofactor is pyridoxal 5'-phosphate.

The enzyme catalyses N(6)-[(R)-lipoyl]-L-lysyl-[glycine-cleavage complex H protein] + glycine + H(+) = N(6)-[(R)-S(8)-aminomethyldihydrolipoyl]-L-lysyl-[glycine-cleavage complex H protein] + CO2. The glycine cleavage system catalyzes the degradation of glycine. The P protein binds the alpha-amino group of glycine through its pyridoxal phosphate cofactor; CO(2) is released and the remaining methylamine moiety is then transferred to the lipoamide cofactor of the H protein. The chain is Glycine dehydrogenase (decarboxylating) from Escherichia coli O8 (strain IAI1).